The sequence spans 103 residues: Large ribosomal subunit protein uL24 (103 aa).

The protein belongs to the universal ribosomal protein uL24 family. As to quaternary structure, part of the 50S ribosomal subunit.

In terms of biological role, one of two assembly initiator proteins, it binds directly to the 5'-end of the 23S rRNA, where it nucleates assembly of the 50S subunit. Its function is as follows. One of the proteins that surrounds the polypeptide exit tunnel on the outside of the subunit. In Oceanobacillus iheyensis (strain DSM 14371 / CIP 107618 / JCM 11309 / KCTC 3954 / HTE831), this protein is Large ribosomal subunit protein uL24.